A 212-amino-acid polypeptide reads, in one-letter code: Eggshell protein 1 (212 aa).

The signal sequence occupies residues 1–27 (MKSSLTLLFLAAIGYTIAYPPPSDYDS). The tract at residues 155–212 (RKNGHGKGGKGGNGGGGGKGGGKGGGNGKGNGKGGGGKNGGGKGGNGGKGGSYAPSYY) is disordered. The span at 163-205 (GKGGNGGGGGKGGGKGGGNGKGNGKGGGGKNGGGKGGNGGKGG) shows a compositional bias: gly residues.

In terms of tissue distribution, detected only in mature female parasites.

This Schistosoma japonicum (Blood fluke) protein is Eggshell protein 1 (ESG-1).